Reading from the N-terminus, the 201-residue chain is Small ribosomal subunit protein uS4c (201 aa).

Residues 17–44 are disordered; sequence ALPGLTNKKPRTGSDLRNQSRSGKKSQY. An S4 RNA-binding domain is found at 89–149; it reads MRLDNILFRL…DEQKSRALIQ (61 aa).

The protein belongs to the universal ribosomal protein uS4 family. Part of the 30S ribosomal subunit. Contacts protein S5. The interaction surface between S4 and S5 is involved in control of translational fidelity.

The protein localises to the plastid. Its subcellular location is the chloroplast. In terms of biological role, one of the primary rRNA binding proteins, it binds directly to 16S rRNA where it nucleates assembly of the body of the 30S subunit. Its function is as follows. With S5 and S12 plays an important role in translational accuracy. This is Small ribosomal subunit protein uS4c (rps4) from Solanum bulbocastanum (Wild potato).